A 732-amino-acid chain; its full sequence is MSSASKCPFSGGALKFTAGSGTANRDWWPNQLNLQILRQHSPKSNPMDKAFNYAEAFKSLDLADVKQDIFDLMKSSQDWWPADYGHYGPLFIRMAWHSAGTYRIGDGRGGAGTGNQRFAPINSWPDNANLDKARMLLWPIKQKYGAKISWADLMILAGNCALESMGFKTFGFAGGREDIWEPEEDIYWGAETEWLGDQRYTGDRDLEATLGAVQMGLIYVNPEGPNGHPDPVASGRDIRETFGRMAMNDEETVALTAGGHTFGKCHGAGDDAHVGPEPEGARIEDQCLGWKSSFGTGKGVHAITSGIEGAWTTNPTQWDNNYFENLFGYEWELTKSPAGANQWVPQGGAGANTVPDAHDPSRRHAPIMTTADMAMRMDPIYSPISRRFLDNPDQFADAFARAWFKLTHRDMGPRSRYLGPEVPEEELIWQDPVPAVNHELINEQDIATLKSQILATNLTVSQLVSTAWASAVTYRNSDKRGGANGARIRLAPQRDWEVNQPAQLATVLQTLEAVQTTFNHSQIGGKRVSLADLIVLGGCAGVEQAAKNAGWYDVKVPFKPGRTDATQAQTDVTSFAVLEPRADGFRNYLKGHYPVSAEELLVDKAQLLTLTAPEMTVLVGGLRVLNANVGQAQHGVFTHRPESLTNDFFLNLLDMSVTWAATSEAEEVFEGRDRKTGALKWTGTRVDLIFGSNSQLRALAEVYGCEDSQQRFVQDFVAAWDKVMNLDRFDLA.

Residues 96-219 (WHSAGTYRIG…LGAVQMGLIY (124 aa)) constitute a cross-link (tryptophyl-tyrosyl-methioninium (Trp-Tyr) (with M-245)). Residue His97 is the Proton acceptor of the active site. A cross-link (tryptophyl-tyrosyl-methioninium (Tyr-Met) (with W-96)) is located at residues 219 to 245 (YVNPEGPNGHPDPVASGRDIRETFGRM). His260 provides a ligand contact to heme b.

The protein belongs to the peroxidase family. Peroxidase/catalase subfamily. In terms of assembly, homodimer or homotetramer. It depends on heme b as a cofactor. In terms of processing, formation of the three residue Trp-Tyr-Met cross-link is important for the catalase, but not the peroxidase activity of the enzyme.

The catalysed reaction is H2O2 + AH2 = A + 2 H2O. It carries out the reaction 2 H2O2 = O2 + 2 H2O. Functionally, bifunctional enzyme with both catalase and broad-spectrum peroxidase activity. In Acaryochloris marina (strain MBIC 11017), this protein is Catalase-peroxidase.